Reading from the N-terminus, the 194-residue chain is A-type ATP synthase subunit E (194 aa).

The tract at residues 35 to 56 (DAEADADQIREEREAEVERTIE) is disordered. The segment covering 41 to 56 (DQIREEREAEVERTIE) has biased composition (basic and acidic residues).

This sequence belongs to the V-ATPase E subunit family. Has multiple subunits with at least A(3), B(3), C, D, E, F, H, I and proteolipid K(x).

It localises to the cell membrane. Its function is as follows. Component of the A-type ATP synthase that produces ATP from ADP in the presence of a proton gradient across the membrane. The polypeptide is A-type ATP synthase subunit E (Haloarcula marismortui (strain ATCC 43049 / DSM 3752 / JCM 8966 / VKM B-1809) (Halobacterium marismortui)).